The following is a 112-amino-acid chain: Putative pterin-4-alpha-carbinolamine dehydratase (112 aa).

Belongs to the pterin-4-alpha-carbinolamine dehydratase family.

It catalyses the reaction (4aS,6R)-4a-hydroxy-L-erythro-5,6,7,8-tetrahydrobiopterin = (6R)-L-erythro-6,7-dihydrobiopterin + H2O. The protein is Putative pterin-4-alpha-carbinolamine dehydratase of Shewanella oneidensis (strain ATCC 700550 / JCM 31522 / CIP 106686 / LMG 19005 / NCIMB 14063 / MR-1).